Reading from the N-terminus, the 439-residue chain is Ornithine aminotransferase, mitochondrial (439 aa).

The N-terminal 25 residues, 1-25, are a transit peptide targeting the mitochondrion; in hepatic form; it reads MFSKLAHLQRFAVLSRGVHSSVASA. The N-terminal 35 residues, 1-35, are a transit peptide targeting the mitochondrion; in renal form; that stretch reads MFSKLAHLQRFAVLSRGVHSSVASATSVATKKTVQ. An N6-acetyllysine mark is found at Lys49 and Lys66. Lys102 carries the post-translational modification N6-succinyllysine. At Lys107 the chain carries N6-acetyllysine; alternate. Lys107 bears the N6-succinyllysine; alternate mark. Position 292 is an N6-(pyridoxal phosphate)lysine (Lys292). Position 362 is an N6-acetyllysine; alternate (Lys362). Lys362 is subject to N6-succinyllysine; alternate. An N6-acetyllysine mark is found at Lys386 and Lys392. Lys405 carries the post-translational modification N6-acetyllysine; alternate. Lys405 carries the post-translational modification N6-succinyllysine; alternate. Lys421 is subject to N6-acetyllysine.

This sequence belongs to the class-III pyridoxal-phosphate-dependent aminotransferase family. Homohexamer. Pyridoxal 5'-phosphate serves as cofactor.

It is found in the mitochondrion matrix. The catalysed reaction is L-ornithine + 2-oxoglutarate = L-glutamate 5-semialdehyde + L-glutamate. The protein operates within amino-acid biosynthesis; L-proline biosynthesis; L-glutamate 5-semialdehyde from L-ornithine: step 1/1. Catalyzes the reversible interconversion of L-ornithine and 2-oxoglutarate to L-glutamate semialdehyde and L-glutamate. The sequence is that of Ornithine aminotransferase, mitochondrial (OAT) from Homo sapiens (Human).